We begin with the raw amino-acid sequence, 273 residues long: Hydroxyethylthiazole kinase (273 aa).

Methionine 47 contributes to the substrate binding site. 2 residues coordinate ATP: arginine 123 and threonine 169. Glycine 196 provides a ligand contact to substrate.

Belongs to the Thz kinase family. It depends on Mg(2+) as a cofactor.

It catalyses the reaction 5-(2-hydroxyethyl)-4-methylthiazole + ATP = 4-methyl-5-(2-phosphooxyethyl)-thiazole + ADP + H(+). The protein operates within cofactor biosynthesis; thiamine diphosphate biosynthesis; 4-methyl-5-(2-phosphoethyl)-thiazole from 5-(2-hydroxyethyl)-4-methylthiazole: step 1/1. Catalyzes the phosphorylation of the hydroxyl group of 4-methyl-5-beta-hydroxyethylthiazole (THZ). In Desulfotalea psychrophila (strain LSv54 / DSM 12343), this protein is Hydroxyethylthiazole kinase.